Reading from the N-terminus, the 468-residue chain is V-type proton ATPase subunit H (468 aa).

Belongs to the V-ATPase H subunit family. V-ATPase is a heteromultimeric enzyme made up of two complexes: the ATP-hydrolytic V1 complex and the proton translocation V0 complex. The V1 complex consists of three catalytic AB heterodimers that form a heterohexamer, three peripheral stalks each consisting of EG heterodimers, one central rotor including subunits D and F, and the regulatory subunits C and H. The proton translocation complex V0 consists of the proton transport subunit a, a ring of proteolipid subunits c9c'', rotary subunit d, subunits e and f, and the accessory subunits VhaAC45 and ATP6AP2.

Its function is as follows. Subunit of the V1 complex of vacuolar(H+)-ATPase (V-ATPase), a multisubunit enzyme composed of a peripheral complex (V1) that hydrolyzes ATP and a membrane integral complex (V0) that translocates protons. V-ATPase is responsible for acidifying and maintaining the pH of intracellular compartments and in some cell types, is targeted to the plasma membrane, where it is responsible for acidifying the extracellular environment. Subunit H is essential for V-ATPase activity, but not for the assembly of the complex. The protein is V-type proton ATPase subunit H (VhaSFD) of Drosophila melanogaster (Fruit fly).